Here is a 199-residue protein sequence, read N- to C-terminus: Recombination protein RecR (199 aa).

Residues Cys57 to Cys72 form a C4-type zinc finger. The Toprim domain maps to Ser80–Ala176.

The protein belongs to the RecR family.

May play a role in DNA repair. It seems to be involved in an RecBC-independent recombinational process of DNA repair. It may act with RecF and RecO. This chain is Recombination protein RecR, found in Streptococcus mutans serotype c (strain ATCC 700610 / UA159).